Reading from the N-terminus, the 170-residue chain is Peptide deformylase (170 aa).

Positions 91 and 133 each coordinate Fe cation. Glu134 is an active-site residue. Fe cation is bound at residue His137.

This sequence belongs to the polypeptide deformylase family. Fe(2+) serves as cofactor.

It carries out the reaction N-terminal N-formyl-L-methionyl-[peptide] + H2O = N-terminal L-methionyl-[peptide] + formate. Functionally, removes the formyl group from the N-terminal Met of newly synthesized proteins. Requires at least a dipeptide for an efficient rate of reaction. N-terminal L-methionine is a prerequisite for activity but the enzyme has broad specificity at other positions. This chain is Peptide deformylase, found in Histophilus somni (strain 129Pt) (Haemophilus somnus).